Reading from the N-terminus, the 1144-residue chain is PAN2-PAN3 deadenylation complex catalytic subunit PAN2 (1144 aa).

WD repeat units lie at residues 27-66, 153-193, 196-233, and 302-341; these read KKEK…YTRH, SSTY…VIHS, GHSA…NVYD, and HPCK…SGFT. A linker region spans residues 344–481; it reads AAVLEYQDYP…LLEYKPSNNI (138 aa). A USP domain is found at 482–887; the sequence is DIPPAYSKLQ…TPEIVVYSDA (406 aa). One can recognise an Exonuclease domain in the interval 939–1110; sequence VALDAEFVSL…EDAHTALLLY (172 aa). Positions 942, 944, 1051, and 1102 each coordinate a divalent metal cation.

Belongs to the peptidase C19 family. PAN2 subfamily. As to quaternary structure, forms a heterotrimer with an asymmetric homodimer of the regulatory subunit PAN3 to form the poly(A)-nuclease (PAN) deadenylation complex. A divalent metal cation is required as a cofactor.

The protein resides in the cytoplasm. It carries out the reaction Exonucleolytic cleavage of poly(A) to 5'-AMP.. Its activity is regulated as follows. Positively regulated by the regulatory subunit PAN3. Its function is as follows. Catalytic subunit of the poly(A)-nuclease (PAN) deadenylation complex, one of two cytoplasmic mRNA deadenylases involved in mRNA turnover. PAN specifically shortens poly(A) tails of RNA and the activity is stimulated by poly(A)-binding protein PAB1. PAN deadenylation is followed by rapid degradation of the shortened mRNA tails by the CCR4-NOT complex. Deadenylated mRNAs are then degraded by two alternative mechanisms, namely exosome-mediated 3'-5' exonucleolytic degradation, or deadenylation-dependent mRNA decaping and subsequent 5'-3' exonucleolytic degradation by XRN1. May also be involved in post-transcriptional maturation of mRNA poly(A) tails. This is PAN2-PAN3 deadenylation complex catalytic subunit PAN2 from Kluyveromyces lactis (strain ATCC 8585 / CBS 2359 / DSM 70799 / NBRC 1267 / NRRL Y-1140 / WM37) (Yeast).